A 464-amino-acid chain; its full sequence is Citrate synthase 5, mitochondrial (464 aa).

The N-terminal 25 residues, 1–25 (MVFFRSVSAISRLRSRAVQQSSLSN), are a transit peptide targeting the mitochondrion. Active-site residues include His300, His346, and Asp401.

This sequence belongs to the citrate synthase family.

It is found in the mitochondrion matrix. It catalyses the reaction oxaloacetate + acetyl-CoA + H2O = citrate + CoA + H(+). Its pathway is carbohydrate metabolism; tricarboxylic acid cycle; isocitrate from oxaloacetate: step 1/2. In Arabidopsis thaliana (Mouse-ear cress), this protein is Citrate synthase 5, mitochondrial (CSY5).